The following is a 146-amino-acid chain: VEWTDFERATIQDIFSKMDYETVGPATLTRTVIVYPWTLRYFAKFGNICSTAAILGNKEIAKHGTTILHGLDRGVKNMDDIKNTYAELSKLHSEKLHVDPDNFRLLSDCLTIVVAAKMGKDFTGEVQAAFQKFLSVVVNSLGRQYH.

In terms of domain architecture, Globin spans 2–146 (EWTDFERATI…VVNSLGRQYH (145 aa)). His63 and His92 together coordinate heme b.

It belongs to the globin family. In terms of assembly, heterotetramer of two alpha chains and two beta chains. Can form polymers. As to expression, red blood cells.

Functionally, involved in oxygen transport from gills to the various peripheral tissues. This is Hemoglobin subunit beta (hbb) from Chelidonichthys kumu (Bluefin gurnard).